A 546-amino-acid polypeptide reads, in one-letter code: Thermolysin (546 aa).

The signal sequence occupies residues 1–25 (MDKRAMLGAIGLAFGLMAWPFGASA). The propeptide at 26 to 228 (KEKSMVWNEQ…EAKPGGGQPV (203 aa)) is activation peptide. Positions 287, 289, 291, and 368 each coordinate Ca(2+). Histidine 372 provides a ligand contact to Zn(2+). Glutamate 373 is a catalytic residue. Positions 376 and 396 each coordinate Zn(2+). Residues asparagine 413, aspartate 415, glutamate 417, glutamate 420, tyrosine 423, threonine 424, isoleucine 427, and aspartate 430 each contribute to the Ca(2+) site. Residue histidine 461 is the Proton donor of the active site.

This sequence belongs to the peptidase M4 family. Ca(2+) serves as cofactor. It depends on Zn(2+) as a cofactor.

The protein localises to the secreted. It catalyses the reaction Preferential cleavage: Xaa-|-Leu &gt; Xaa-|-Phe.. Its function is as follows. Extracellular zinc metalloprotease. Has collagenase activity. This is Thermolysin (npr) from Bacillus sp. (strain EA1).